The chain runs to 167 residues: Small ribosomal subunit protein uS9 (167 aa).

The disordered stretch occupies residues methionine 1–serine 41. A compositionally biased stretch (polar residues) spans threonine 17–serine 26.

It belongs to the universal ribosomal protein uS9 family.

The polypeptide is Small ribosomal subunit protein uS9 (Renibacterium salmoninarum (strain ATCC 33209 / DSM 20767 / JCM 11484 / NBRC 15589 / NCIMB 2235)).